Consider the following 289-residue polypeptide: MQPPKTHNHIELAFEIDSDLYELYIAVLSQVGIEYFLEDDHKLLAYLPESDWNADKEASINIMLQETFGSVPRFTASFMADRNWNAEWEAHLQPVEISDRFLIIQHQKEYDVKPGQIVIAINPKMSFGTGYHATTRLMLRQMEELDLADKKIMDIGTGTGVLAIAARKLGNRNPILAFDNNAWAAENAVENVAENDVADIRVELLDAEEELAATLEEGYDLILANINKNVLDRILPTIRRHAPNAQVLLSGVLVYDEPWLKQLLKRIKYTNVKTIYEDEWLSALVEPKN.

S-adenosyl-L-methionine contacts are provided by threonine 135, glycine 156, aspartate 179, and asparagine 225.

Belongs to the methyltransferase superfamily. PrmA family.

The protein localises to the cytoplasm. The catalysed reaction is L-lysyl-[protein] + 3 S-adenosyl-L-methionine = N(6),N(6),N(6)-trimethyl-L-lysyl-[protein] + 3 S-adenosyl-L-homocysteine + 3 H(+). In terms of biological role, methylates ribosomal protein L11. In Chlorobaculum tepidum (strain ATCC 49652 / DSM 12025 / NBRC 103806 / TLS) (Chlorobium tepidum), this protein is Ribosomal protein L11 methyltransferase.